We begin with the raw amino-acid sequence, 101 residues long: Small ribosomal subunit protein uS14 (101 aa).

This sequence belongs to the universal ribosomal protein uS14 family. Part of the 30S ribosomal subunit. Contacts proteins S3 and S10.

Functionally, binds 16S rRNA, required for the assembly of 30S particles and may also be responsible for determining the conformation of the 16S rRNA at the A site. The sequence is that of Small ribosomal subunit protein uS14 from Shewanella sediminis (strain HAW-EB3).